The following is a 352-amino-acid chain: Cell division protein ZipA (352 aa).

Over 1-6 (MKDLQL) the chain is Periplasmic. Residues 7 to 27 (VLFVLGAIAIIAVLVHGFWSI) traverse the membrane as a helical segment. The Cytoplasmic segment spans residues 28–352 (RKQQPKSMKQ…KDYLRRLNAA (325 aa)). Disordered stretches follow at residues 78–120 (KPVL…HVEP) and 138–160 (PAPTASTSMNTPKKIFNPSTSTA). Residues 83-105 (TNLSQKPHSGTTKLTDTPLQDSL) are compositionally biased toward polar residues. Over residues 111 to 120 (HKTEPEHVEP) the composition is skewed to basic and acidic residues. Over residues 141-160 (TASTSMNTPKKIFNPSTSTA) the composition is skewed to polar residues.

Belongs to the ZipA family. Interacts with FtsZ via their C-terminal domains.

It is found in the cell inner membrane. Its function is as follows. Essential cell division protein that stabilizes the FtsZ protofilaments by cross-linking them and that serves as a cytoplasmic membrane anchor for the Z ring. Also required for the recruitment to the septal ring of downstream cell division proteins. The protein is Cell division protein ZipA of Shewanella frigidimarina (strain NCIMB 400).